Consider the following 396-residue polypeptide: S-adenosylmethionine synthase (396 aa).

Histidine 16 is an ATP binding site. A Mg(2+)-binding site is contributed by aspartate 18. Residue glutamate 44 coordinates K(+). L-methionine-binding residues include glutamate 57 and glutamine 100. Residues 100-110 form a flexible loop region; sequence QSVDIAQGVDR. Residues 165–167, aspartate 240, 246–247, alanine 263, and lysine 267 each bind ATP; these read DAK and RK. Residue aspartate 240 participates in L-methionine binding. Lysine 271 is a binding site for L-methionine.

The protein belongs to the AdoMet synthase family. Homotetramer; dimer of dimers. Mg(2+) is required as a cofactor. The cofactor is K(+).

It is found in the cytoplasm. The enzyme catalyses L-methionine + ATP + H2O = S-adenosyl-L-methionine + phosphate + diphosphate. It functions in the pathway amino-acid biosynthesis; S-adenosyl-L-methionine biosynthesis; S-adenosyl-L-methionine from L-methionine: step 1/1. Its function is as follows. Catalyzes the formation of S-adenosylmethionine (AdoMet) from methionine and ATP. The overall synthetic reaction is composed of two sequential steps, AdoMet formation and the subsequent tripolyphosphate hydrolysis which occurs prior to release of AdoMet from the enzyme. The protein is S-adenosylmethionine synthase of Pseudomonas syringae pv. tomato (strain ATCC BAA-871 / DC3000).